The following is a 419-amino-acid chain: L-rhamnose isomerase (419 aa).

The Mn(2+) site is built by H262, D294, and D296.

This sequence belongs to the rhamnose isomerase family. In terms of assembly, homotetramer. The cofactor is Mn(2+).

The protein resides in the cytoplasm. The enzyme catalyses L-rhamnopyranose = L-rhamnulose. It functions in the pathway carbohydrate degradation; L-rhamnose degradation; glycerone phosphate from L-rhamnose: step 1/3. In terms of biological role, catalyzes the interconversion of L-rhamnose and L-rhamnulose. This is L-rhamnose isomerase from Escherichia coli O7:K1 (strain IAI39 / ExPEC).